The sequence spans 174 residues: CASP-like protein 4D2 (174 aa).

At 1 to 14 the chain is on the cytoplasmic side; sequence MAPPPPSPPPVSLK. Residues 15–35 form a helical membrane-spanning segment; it reads VSLLLLRVLTGVFLVIALIIL. Topologically, residues 36–60 are extracellular; that stretch reads STNSVTIVSQGSALKFHFKDVYAYR. Residues 61-81 form a helical membrane-spanning segment; the sequence is YMLSAAVIGLLYAVIQLFFTI. Topologically, residues 82-150 are cytoplasmic; sequence SEFATGMKNP…FFSRGYASAS (69 aa). A helical membrane pass occupies residues 151-171; sequence LLLFSFICLAVLSVFSSLAIA. The Extracellular portion of the chain corresponds to 172-174; sequence KRN.

Belongs to the Casparian strip membrane proteins (CASP) family. In terms of assembly, homodimer and heterodimers.

The protein resides in the cell membrane. The protein is CASP-like protein 4D2 of Arabidopsis lyrata subsp. lyrata (Lyre-leaved rock-cress).